We begin with the raw amino-acid sequence, 240 residues long: Ribosomal RNA small subunit methyltransferase G (240 aa).

Residues G79, 130 to 131, and R149 each bind S-adenosyl-L-methionine; that span reads AE.

The protein belongs to the methyltransferase superfamily. RNA methyltransferase RsmG family.

The protein resides in the cytoplasm. In terms of biological role, specifically methylates the N7 position of a guanine in 16S rRNA. This chain is Ribosomal RNA small subunit methyltransferase G, found in Moorella thermoacetica (strain ATCC 39073 / JCM 9320).